The primary structure comprises 192 residues: Flavin prenyltransferase UbiX (192 aa).

FMN is bound by residues 10–12, Ser36, 92–95, and Arg127; these read GAS and SVAT. Dimethylallyl phosphate contacts are provided by Tyr157 and Lys173.

Belongs to the UbiX/PAD1 family.

The catalysed reaction is dimethylallyl phosphate + FMNH2 = prenylated FMNH2 + phosphate. Flavin prenyltransferase that catalyzes the synthesis of the prenylated FMN cofactor (prenyl-FMN) for 4-hydroxy-3-polyprenylbenzoic acid decarboxylase UbiD. The prenyltransferase is metal-independent and links a dimethylallyl moiety from dimethylallyl monophosphate (DMAP) to the flavin N5 and C6 atoms of FMN. This chain is Flavin prenyltransferase UbiX, found in Chlamydia muridarum (strain MoPn / Nigg).